Reading from the N-terminus, the 442-residue chain is Prenyltransferase nscD (442 aa).

The protein belongs to the tryptophan dimethylallyltransferase family.

The protein operates within secondary metabolite biosynthesis. Its function is as follows. Prenyltransferase; part of the gene cluster that mediates the biosynthesis of neosartoricin B, a prenylated anthracenone that probably exhibits T-cell antiproliferative activity, suggestive of a physiological role as an immunosuppressive agent. The non-reducing polyketide synthase nscA probably synthesizes and cyclizes the decaketide backbone. The hydrolase nscB then mediates the product release through hydrolysis followed by spontaneous decarboxylation. The prenyltransferase nscD catalyzes the addition of the dimethylallyl group to the aromatic C5. The FAD-dependent monooxygenase nscC is then responsible for the stereospecific hydroxylation at C2. Neosartoricin B can be converted into two additional compounds neosartoricins C and D. Neosartoricin C is a spirocyclic compound that is cyclized through the attack of C3 hydroxyl on C14, followed by dehydration. On the other hand, neosartoricin D is a further cyclized compound in which attack of C2 on C14 in neosartoricin C results in the formation of the acetal-containing dioxabicyclo-octanone ring. Both of these compounds are novel and possibly represent related metabolites of the gene cluster. This is Prenyltransferase nscD from Trichophyton verrucosum (strain HKI 0517).